The following is a 114-amino-acid chain: Cystatin Pr15a (114 aa).

Residues 1-22 (MFTVKLLAFMVVAVSLQHLAEA) form the signal peptide. In terms of domain architecture, Cystatin spans 29 to 83 (GCPVEVDPNREDIKKSLAHVMAAKNSPDELVRIIKASTQVVNGIKYKVVFEVKNP).

This sequence belongs to the cystatin family. As to expression, expressed by the venom gland (anterior main gland) (at protein level).

The protein resides in the secreted. This is Cystatin Pr15a from Platymeris rhadamanthus (Red spot assassin bug).